A 198-amino-acid chain; its full sequence is Putative Do-like 15 protein (198 aa).

A serine protease region spans residues 48–198; that stretch reads KIFSFSREPN…VFENDSPSDK (151 aa). Catalysis depends on charge relay system residues H86 and S175.

It belongs to the peptidase S1B family.

The protein is Putative Do-like 15 protein (DEGP15) of Arabidopsis thaliana (Mouse-ear cress).